Consider the following 360-residue polypeptide: Metalloendoproteinase 5-MMP (360 aa).

Positions Met1–Ala20 are cleaved as a signal peptide. A propeptide spans Lys21 to Lys142 (activation peptide). Residues Asn25, Asn36, and Asn78 are each glycosylated (N-linked (GlcNAc...) asparagine). Residues Pro117–Leu124 carry the Cysteine switch motif. Cys119 contacts Zn(2+). N-linked (GlcNAc...) asparagine glycans are attached at residues Asn168 and Asn191. His270 contacts Zn(2+). Glu271 is an active-site residue. 2 residues coordinate Zn(2+): His274 and His280. Residues Leu312–Asp336 are disordered. The GPI-anchor amidated serine moiety is linked to residue Ser337. Residues Val338–Val360 constitute a propeptide, removed in mature form.

Belongs to the peptidase M10A family. Matrix metalloproteinases (MMPs) subfamily. The cofactor is Zn(2+). Mostly expressed in leaves, roots and stems, and, to a lower extent, in flowers.

It is found in the cell membrane. Repressed by acetohydroxamic acid (AHA). In terms of biological role, matrix metalloproteinases (MMPs) or matrixins may play a role in the degradation and remodeling of the extracellular matrix (ECM) during development or in response to stresses. Active on Mca-KESAbuNLFVLKDpaR-NH(2) (QF75) and, to some extent, on McaPLGLDpaAR-NH(2) (QF24), myelin basic protein (MBP) and beta-casein. This chain is Metalloendoproteinase 5-MMP, found in Arabidopsis thaliana (Mouse-ear cress).